We begin with the raw amino-acid sequence, 211 residues long: Protein-methionine-sulfoxide reductase heme-binding subunit MsrQ (211 aa).

Transmembrane regions (helical) follow at residues 17 to 37 (LAGLLPFLWLVWAINHGGLGA), 82 to 102 (LWCFAWATLHLTSYALLELGV), 116 to 136 (PYLTLGIISWVILLALAFTST), and 153 to 173 (FVYLVAILAPIHYLWSVKIIS).

The protein belongs to the MsrQ family. As to quaternary structure, heterodimer of a catalytic subunit (MsrP) and a heme-binding subunit (MsrQ). FMN serves as cofactor. Heme b is required as a cofactor.

The protein resides in the cell inner membrane. In terms of biological role, part of the MsrPQ system that repairs oxidized periplasmic proteins containing methionine sulfoxide residues (Met-O), using respiratory chain electrons. Thus protects these proteins from oxidative-stress damage caused by reactive species of oxygen and chlorine generated by the host defense mechanisms. MsrPQ is essential for the maintenance of envelope integrity under bleach stress, rescuing a wide series of structurally unrelated periplasmic proteins from methionine oxidation, including the primary periplasmic chaperone SurA and the lipoprotein Pal. MsrQ provides electrons for reduction to the reductase catalytic subunit MsrP, using the quinone pool of the respiratory chain. This chain is Protein-methionine-sulfoxide reductase heme-binding subunit MsrQ, found in Shigella sonnei (strain Ss046).